We begin with the raw amino-acid sequence, 133 residues long: uncharacterized protein (133 aa).

It belongs to the ycf68 family.

The protein localises to the plastid. It is found in the chloroplast. This is an uncharacterized protein from Oryza sativa subsp. japonica (Rice).